A 180-amino-acid chain; its full sequence is ATP synthase subunit delta (180 aa).

Belongs to the ATPase delta chain family. In terms of assembly, F-type ATPases have 2 components, F(1) - the catalytic core - and F(0) - the membrane proton channel. F(1) has five subunits: alpha(3), beta(3), gamma(1), delta(1), epsilon(1). CF(0) has four main subunits: a(1), b(1), b'(1) and c(10-14). The alpha and beta chains form an alternating ring which encloses part of the gamma chain. F(1) is attached to F(0) by a central stalk formed by the gamma and epsilon chains, while a peripheral stalk is formed by the delta, b and b' chains.

The protein localises to the cellular thylakoid membrane. In terms of biological role, f(1)F(0) ATP synthase produces ATP from ADP in the presence of a proton or sodium gradient. F-type ATPases consist of two structural domains, F(1) containing the extramembraneous catalytic core and F(0) containing the membrane proton channel, linked together by a central stalk and a peripheral stalk. During catalysis, ATP synthesis in the catalytic domain of F(1) is coupled via a rotary mechanism of the central stalk subunits to proton translocation. Its function is as follows. This protein is part of the stalk that links CF(0) to CF(1). It either transmits conformational changes from CF(0) to CF(1) or is implicated in proton conduction. This is ATP synthase subunit delta from Prochlorococcus marinus (strain AS9601).